A 325-amino-acid polypeptide reads, in one-letter code: Eukaryotic translation initiation factor 3 subunit I (325 aa).

WD repeat units follow at residues 1 to 39 (MKPI…VWYS), 43 to 81 (ERLG…LWDC), 87 to 127 (LALL…FFDL), 135 to 175 (NNEP…QYSA), and 180 to 217 (VLVN…LFDS). Residue Thr-219 is modified to Phosphothreonine. WD repeat units follow at residues 221 to 267 (EHQK…KFEA) and 275 to 316 (EEEF…YFDP). The residue at position 264 (Lys-264) is an N6-acetyllysine. Lys-282 is covalently cross-linked (Glycyl lysine isopeptide (Lys-Gly) (interchain with G-Cter in ubiquitin)). The residue at position 308 (Tyr-308) is a Phosphotyrosine.

Component of the eukaryotic translation initiation factor 3 (eIF-3) complex, which is composed of 13 subunits: EIF3A, EIF3B, EIF3C, EIF3D, EIF3E, EIF3F, EIF3G, EIF3H, EIF3I, EIF3J, EIF3K, EIF3L and EIF3M. The eIF-3 complex appears to include 3 stable modules: module A is composed of EIF3A, EIF3B, EIF3G and EIF3I; module B is composed of EIF3F, EIF3H, and EIF3M; and module C is composed of EIF3C, EIF3D, EIF3E, EIF3K and EIF3L. EIF3C of module C binds EIF3B of module A and EIF3H of module B, thereby linking the three modules. EIF3J is a labile subunit that binds to the eIF-3 complex via EIF3B. The eIF-3 complex interacts with RPS6KB1 under conditions of nutrient depletion. Mitogenic stimulation leads to binding and activation of a complex composed of MTOR and RPTOR, leading to phosphorylation and release of RPS6KB1 and binding of EIF4B to eIF-3. Post-translationally, phosphorylated by TGF-beta type II receptor.

The protein resides in the cytoplasm. Functionally, component of the eukaryotic translation initiation factor 3 (eIF-3) complex, which is required for several steps in the initiation of protein synthesis. The eIF-3 complex associates with the 40S ribosome and facilitates the recruitment of eIF-1, eIF-1A, eIF-2:GTP:methionyl-tRNAi and eIF-5 to form the 43S pre-initiation complex (43S PIC). The eIF-3 complex stimulates mRNA recruitment to the 43S PIC and scanning of the mRNA for AUG recognition. The eIF-3 complex is also required for disassembly and recycling of post-termination ribosomal complexes and subsequently prevents premature joining of the 40S and 60S ribosomal subunits prior to initiation. The eIF-3 complex specifically targets and initiates translation of a subset of mRNAs involved in cell proliferation, including cell cycling, differentiation and apoptosis, and uses different modes of RNA stem-loop binding to exert either translational activation or repression. In Homo sapiens (Human), this protein is Eukaryotic translation initiation factor 3 subunit I.